Consider the following 292-residue polypeptide: Diaminopimelate epimerase (292 aa).

Substrate-binding residues include Asn-13, Gln-46, and Asn-66. Cys-75 serves as the catalytic Proton donor. Substrate is bound by residues Gly-76–Asn-77, Asn-166, Asn-199, and Glu-217–Arg-218. The active-site Proton acceptor is the Cys-226. Gly-227–Thr-228 lines the substrate pocket.

Belongs to the diaminopimelate epimerase family. As to quaternary structure, homodimer.

The protein resides in the cytoplasm. The catalysed reaction is (2S,6S)-2,6-diaminopimelate = meso-2,6-diaminopimelate. Its pathway is amino-acid biosynthesis; L-lysine biosynthesis via DAP pathway; DL-2,6-diaminopimelate from LL-2,6-diaminopimelate: step 1/1. In terms of biological role, catalyzes the stereoinversion of LL-2,6-diaminopimelate (L,L-DAP) to meso-diaminopimelate (meso-DAP), a precursor of L-lysine and an essential component of the bacterial peptidoglycan. The polypeptide is Diaminopimelate epimerase (Ralstonia nicotianae (strain ATCC BAA-1114 / GMI1000) (Ralstonia solanacearum)).